The following is a 354-amino-acid chain: UDP-3-O-acylglucosamine N-acyltransferase (354 aa).

His-258 serves as the catalytic Proton acceptor.

Belongs to the transferase hexapeptide repeat family. LpxD subfamily. As to quaternary structure, homotrimer.

It catalyses the reaction a UDP-3-O-[(3R)-3-hydroxyacyl]-alpha-D-glucosamine + a (3R)-hydroxyacyl-[ACP] = a UDP-2-N,3-O-bis[(3R)-3-hydroxyacyl]-alpha-D-glucosamine + holo-[ACP] + H(+). The protein operates within bacterial outer membrane biogenesis; LPS lipid A biosynthesis. Functionally, catalyzes the N-acylation of UDP-3-O-acylglucosamine using 3-hydroxyacyl-ACP as the acyl donor. Is involved in the biosynthesis of lipid A, a phosphorylated glycolipid that anchors the lipopolysaccharide to the outer membrane of the cell. The chain is UDP-3-O-acylglucosamine N-acyltransferase from Sinorhizobium medicae (strain WSM419) (Ensifer medicae).